A 687-amino-acid polypeptide reads, in one-letter code: Glycine--tRNA ligase beta subunit (687 aa).

It belongs to the class-II aminoacyl-tRNA synthetase family. Tetramer of two alpha and two beta subunits.

It is found in the cytoplasm. It catalyses the reaction tRNA(Gly) + glycine + ATP = glycyl-tRNA(Gly) + AMP + diphosphate. In Geotalea daltonii (strain DSM 22248 / JCM 15807 / FRC-32) (Geobacter daltonii), this protein is Glycine--tRNA ligase beta subunit.